We begin with the raw amino-acid sequence, 205 residues long: Thiamine-phosphate synthase (205 aa).

Residues 37-41 and N69 contribute to the 4-amino-2-methyl-5-(diphosphooxymethyl)pyrimidine site; that span reads QVREK. Mg(2+) contacts are provided by D70 and D89. S108 lines the 4-amino-2-methyl-5-(diphosphooxymethyl)pyrimidine pocket. 134 to 136 lines the 2-[(2R,5Z)-2-carboxy-4-methylthiazol-5(2H)-ylidene]ethyl phosphate pocket; sequence TGS. K137 contacts 4-amino-2-methyl-5-(diphosphooxymethyl)pyrimidine. 2-[(2R,5Z)-2-carboxy-4-methylthiazol-5(2H)-ylidene]ethyl phosphate contacts are provided by residues G165 and 185-186; that span reads IS.

Belongs to the thiamine-phosphate synthase family. It depends on Mg(2+) as a cofactor.

The catalysed reaction is 2-[(2R,5Z)-2-carboxy-4-methylthiazol-5(2H)-ylidene]ethyl phosphate + 4-amino-2-methyl-5-(diphosphooxymethyl)pyrimidine + 2 H(+) = thiamine phosphate + CO2 + diphosphate. The enzyme catalyses 2-(2-carboxy-4-methylthiazol-5-yl)ethyl phosphate + 4-amino-2-methyl-5-(diphosphooxymethyl)pyrimidine + 2 H(+) = thiamine phosphate + CO2 + diphosphate. It carries out the reaction 4-methyl-5-(2-phosphooxyethyl)-thiazole + 4-amino-2-methyl-5-(diphosphooxymethyl)pyrimidine + H(+) = thiamine phosphate + diphosphate. The protein operates within cofactor biosynthesis; thiamine diphosphate biosynthesis; thiamine phosphate from 4-amino-2-methyl-5-diphosphomethylpyrimidine and 4-methyl-5-(2-phosphoethyl)-thiazole: step 1/1. Its function is as follows. Condenses 4-methyl-5-(beta-hydroxyethyl)thiazole monophosphate (THZ-P) and 2-methyl-4-amino-5-hydroxymethyl pyrimidine pyrophosphate (HMP-PP) to form thiamine monophosphate (TMP). This is Thiamine-phosphate synthase from Clostridium botulinum (strain Loch Maree / Type A3).